We begin with the raw amino-acid sequence, 505 residues long: ATP synthase subunit alpha, chloroplastic (505 aa).

170–177 (GDRQTGKT) contacts ATP.

Belongs to the ATPase alpha/beta chains family. In terms of assembly, F-type ATPases have 2 components, CF(1) - the catalytic core - and CF(0) - the membrane proton channel. CF(1) has five subunits: alpha(3), beta(3), gamma(1), delta(1), epsilon(1). CF(0) has four main subunits: a, b, b' and c.

It is found in the plastid. It localises to the chloroplast thylakoid membrane. The catalysed reaction is ATP + H2O + 4 H(+)(in) = ADP + phosphate + 5 H(+)(out). Produces ATP from ADP in the presence of a proton gradient across the membrane. The alpha chain is a regulatory subunit. This Phaeodactylum tricornutum (strain CCAP 1055/1) protein is ATP synthase subunit alpha, chloroplastic.